A 420-amino-acid chain; its full sequence is Serine hydroxymethyltransferase (420 aa).

(6S)-5,6,7,8-tetrahydrofolate is bound by residues Leu121 and 125–127; that span reads GHL. Position 230 is an N6-(pyridoxal phosphate)lysine (Lys230).

It belongs to the SHMT family. In terms of assembly, homodimer. It depends on pyridoxal 5'-phosphate as a cofactor.

The protein localises to the cytoplasm. It carries out the reaction (6R)-5,10-methylene-5,6,7,8-tetrahydrofolate + glycine + H2O = (6S)-5,6,7,8-tetrahydrofolate + L-serine. It functions in the pathway one-carbon metabolism; tetrahydrofolate interconversion. It participates in amino-acid biosynthesis; glycine biosynthesis; glycine from L-serine: step 1/1. Catalyzes the reversible interconversion of serine and glycine with tetrahydrofolate (THF) serving as the one-carbon carrier. This reaction serves as the major source of one-carbon groups required for the biosynthesis of purines, thymidylate, methionine, and other important biomolecules. Also exhibits THF-independent aldolase activity toward beta-hydroxyamino acids, producing glycine and aldehydes, via a retro-aldol mechanism. The protein is Serine hydroxymethyltransferase of Streptomyces avermitilis (strain ATCC 31267 / DSM 46492 / JCM 5070 / NBRC 14893 / NCIMB 12804 / NRRL 8165 / MA-4680).